Reading from the N-terminus, the 119-residue chain is Large ribosomal subunit protein uL18 (119 aa).

It belongs to the universal ribosomal protein uL18 family. Part of the 50S ribosomal subunit; part of the 5S rRNA/L5/L18/L25 subcomplex. Contacts the 5S and 23S rRNAs.

This is one of the proteins that bind and probably mediate the attachment of the 5S RNA into the large ribosomal subunit, where it forms part of the central protuberance. The protein is Large ribosomal subunit protein uL18 of Xanthomonas campestris pv. campestris (strain 8004).